The primary structure comprises 227 residues: Prolactin (227 aa).

The signal sequence occupies residues Met-1–Ser-28. A disulfide bond links Cys-32 and Cys-39. Phosphoserine is present on residues Ser-54, Ser-62, and Ser-118. Intrachain disulfides connect Cys-86/Cys-202 and Cys-219/Cys-227.

This sequence belongs to the somatotropin/prolactin family. As to quaternary structure, interacts with PRLR.

It localises to the secreted. Prolactin acts primarily on the mammary gland by promoting lactation. The protein is Prolactin (PRL) of Oryctolagus cuniculus (Rabbit).